The sequence spans 504 residues: Maturase K (504 aa).

The protein belongs to the intron maturase 2 family. MatK subfamily.

The protein resides in the plastid. It localises to the chloroplast. Functionally, usually encoded in the trnK tRNA gene intron. Probably assists in splicing its own and other chloroplast group II introns. This chain is Maturase K, found in Vigna unguiculata (Cowpea).